A 514-amino-acid polypeptide reads, in one-letter code: Coiled-coil domain-containing protein 174 (514 aa).

2 disordered regions span residues 42 to 83 (AKPK…DQSR) and 137 to 162 (TLEKETDDEEIEPEMEIPPPEDPDEE). Over residues 63–83 (KRAEKDIEQKAEEDQTLDQSR) the composition is skewed to basic and acidic residues. Residues 66–98 (EKDIEQKAEEDQTLDQSRKKLEEKAKLYEKMTK) adopt a coiled-coil conformation. Residues 141-162 (ETDDEEIEPEMEIPPPEDPDEE) show a composition bias toward acidic residues. Coiled-coil stretches lie at residues 203 to 227 (LLSEDMKRELQRQQWEKEEEEALRK) and 266 to 321 (LDML…LENG). Disordered stretches follow at residues 270-291 (REQTLDQRTKREQLKEKRKAAL) and 306-490 (LREE…PSAH). Composition is skewed to basic and acidic residues over residues 335 to 354 (EVPRPSRKVEVVIQERRDTK) and 376 to 388 (KKQEELRDERDPE). A compositionally biased stretch (polar residues) spans 405–418 (YSSQNLNSPETSPG). The span at 420–429 (TEPEISENQK) shows a compositional bias: basic and acidic residues.

It localises to the nucleus. Functionally, probably involved in neuronal development. The protein is Coiled-coil domain-containing protein 174 (CCDC174) of Gallus gallus (Chicken).